A 1237-amino-acid polypeptide reads, in one-letter code: U3 small nucleolar RNA-associated protein 22 (1237 aa).

The segment at 1–78 is disordered; the sequence is MATSVKRKAS…TNTAATRHNG (78 aa). Phosphoserine is present on residues Ser10 and Ser58. The residue at position 60 (Thr60) is a Phosphothreonine. A compositionally biased stretch (polar residues) spans 61–78; the sequence is SPESNEVATNTAATRHNG. Position 64 is a phosphoserine (Ser64).

Belongs to the NRAP family. Interacts with snoRNA U3. Interacts with MPP10. Component of the ribosomal small subunit (SSU) processome composed of at least 40 protein subunits and snoRNA U3. Interacts with UBP10.

It localises to the nucleus. Its subcellular location is the nucleolus. Its function is as follows. Involved in nucleolar processing of pre-18S ribosomal RNA and ribosome assembly. The chain is U3 small nucleolar RNA-associated protein 22 (UTP22) from Saccharomyces cerevisiae (strain ATCC 204508 / S288c) (Baker's yeast).